The chain runs to 1037 residues: MGFKKLVSFQPDYVPQYHITKYISERTKLQLVHINHKTSPLVHGYFAVPTECLNDSGAPHTLEHLIFMGSKSYPYKGLLDTAGNLSLSNTNAWTDTDQTVYTLSSAGWKGFSKLLPAYLDHILHPTLTDEACLTEVYHIDPENLGDKGVVFSEMEAIETQGWYISGLEKQRLMFPEGSGYRSETGGLTKNLRTLTNDEIRQFHKSLYSSDNLCVIVCGNVPTDELLTVMEEWDNKLPEIPSNIPKKRPFLDNKLSHIPQSRDKVTESTVEFPELDESQGELLFSWIGVPYSDFRNDLAVDVLLDYFTDSALAVFTRELVEIDDPMANSTDCCTDYFMRTIIDLRIQGVPTEKIAATKTKVLEILKTHTIDLSRVRQVVENTKWEYLLNYEKNGESRFSSAVITDYIYGNEDGSSLVSSLKDLSDFDALLQWSQKDWQSLLNRIFVDNKPIIVTAKPSALMYEQLEKEKSDLIKQREAEFDDEKKLVLLKRLNNAKNINDRPIPKSLLQKFEIDNPSKSVEFVNTKSIATVDSYKYNNVSDPLTKKILETRPDNFPLFIHLNHFPSQFIELHFLVNSASIKDTSLLPYFNMFDELFSMPMKILDEESNVETMLSFEEVVAKLKSETIDAQINQGLKGSCPDLINFKIQCRAGGYSNSVQWIKHCLFDMVFDENRVRILLENYLNSIVEWKRNGNVMLSSLTNRNLYSARSLKKSTDPLFVEAKLQEIFAEIENGNFEKEILPRIETMRKQLRANFNKFHILVLGDISKIDDVYEPWNPLIKCLNIAHPVEKLKIPPVPRALDTISSICRTPGEKAFIITTPASESAYMNLITSIPFNLDYHDPEYAIVSLASEYLECVEGPFWKGIRGAGLAYGASMLKLCEINSWGFNIYRGADIIKCYEVGKQIVQDYASGALEFDEQLIQGAISSIINRLATIECGYFETALSKYVDEFCLQRGNNFNELYLERLQNVTKTDLKNAMQKYFVNMFDSNKSVAFVSCHPAKLESVQEFFETQGFTVEIEELEDDDDEIDSEEDENA.

This is an uncharacterized protein from Saccharomyces cerevisiae (strain ATCC 204508 / S288c) (Baker's yeast).